The primary structure comprises 704 residues: Mannan-binding lectin serine protease 1 (704 aa).

The first 24 residues, 1–24 (MRFLSFRRLLLYHVLCLTLTEVSA), serve as a signal peptide directing secretion. The CUB 1 domain maps to 25–143 (HTVELNEMFG…TGFDAHYMAV (119 aa)). Residues 25 to 189 (HTVELNEMFG…HTDNRTCRVE (165 aa)) are homodimerization. The segment at 25–189 (HTVELNEMFG…HTDNRTCRVE (165 aa)) is interaction with MBL2. Positions 25–283 (HTVELNEMFG…STQSHSIQIL (259 aa)) are interaction with FCN2. The interaction with MBL1 stretch occupies residues 25 to 305 (HTVELNEMFG…RLSYRAAGNE (281 aa)). Residue N54 is glycosylated (N-linked (GlcNAc...) asparagine). Positions 73, 81, 126, 128, 144, 145, and 147 each coordinate Ca(2+). An intrachain disulfide couples C78 to C96. The EGF-like; calcium-binding domain maps to 144-187 (DVDECKEREDEELSCDHYCHNYIGGYYCSCRFGYILHTDNRTCR). 4 disulfide bridges follow: C148/C162, C158/C171, C173/C186, and C190/C217. Positions 164, 165, and 168 each coordinate Ca(2+). A (3R)-3-hydroxyasparagine modification is found at N164. The N-linked (GlcNAc...) asparagine glycan is linked to N183. Positions 190–302 (CSGNLFTQRT…RGWRLSYRAA (113 aa)) constitute a CUB 2 domain. E240, D250, D287, and S289 together coordinate Ca(2+). Cysteines 247 and 265 form a disulfide. 2 Sushi domains span residues 304–369 (NECP…TCKI) and 370–439 (VDCG…TCLP). 6 disulfides stabilise this stretch: C306/C354, C334/C367, C372/C419, C402/C437, C441/C577, and C480/C496. 2 N-linked (GlcNAc...) asparagine glycosylation sites follow: N390 and N412. The 248-residue stretch at 454 to 701 (IFNGRPAQKG…NKDWIQRVTG (248 aa)) folds into the Peptidase S1 domain. Catalysis depends on H495, which acts as the Charge relay system. A glycan (N-linked (GlcNAc...) asparagine) is linked at L538. D557 functions as the Charge relay system in the catalytic mechanism. N-linked (GlcNAc...) asparagine glycosylation occurs at E604. Intrachain disulfides connect C619–C636 and C647–C677. Catalysis depends on S651, which acts as the Charge relay system.

Belongs to the peptidase S1 family. As to quaternary structure, homodimer. Interacts with the oligomeric lectins MBL2, FCN2 and FCN3; triggers the lectin pathway of complement through activation of C3. Interacts with SERPING1. Interacts with COLEC11; probably triggers the lectin pathway of complement. In terms of processing, the iron and 2-oxoglutarate dependent 3-hydroxylation of aspartate and asparagine is (R) stereospecific within EGF domains. Post-translationally, N-glycosylated. Some N-linked glycan are of the complex-type. Autoproteolytic processing of the proenzyme produces the active enzyme composed on the heavy and the light chain held together by a disulfide bond. Isoform 1 but not isoform 2 is activated through autoproteolytic processing. Protein of the plasma which is primarily expressed by liver.

The protein localises to the secreted. With respect to regulation, inhibited by SERPING1 and A2M. Functions in the lectin pathway of complement, which performs a key role in innate immunity by recognizing pathogens through patterns of sugar moieties and neutralizing them. The lectin pathway is triggered upon binding of mannan-binding lectin (MBL) and ficolins to sugar moieties which leads to activation of the associated proteases MASP1 and MASP2. Functions as an endopeptidase and may activate MASP2 or C2 or directly activate C3 the key component of complement reaction. Isoform 2 may have an inhibitory effect on the activation of the lectin pathway of complement or may cleave IGFBP5. Also plays a role in development. This is Mannan-binding lectin serine protease 1 (Masp1) from Rattus norvegicus (Rat).